The sequence spans 306 residues: D-alanine--D-alanine ligase B (306 aa).

Residues 101–303 (KLLWQGAGLP…FSQLVVRILE (203 aa)) form the ATP-grasp domain. 134–189 (ISALGLPLIVKPSREGSSVGMTKVVEENALQGALSLAFQHDDEILIEKWLCGPEFT) provides a ligand contact to ATP. 3 residues coordinate Mg(2+): aspartate 257, glutamate 270, and asparagine 272.

The protein belongs to the D-alanine--D-alanine ligase family. Monomer. It depends on Mg(2+) as a cofactor. Mn(2+) serves as cofactor.

The protein localises to the cytoplasm. The enzyme catalyses 2 D-alanine + ATP = D-alanyl-D-alanine + ADP + phosphate + H(+). The protein operates within cell wall biogenesis; peptidoglycan biosynthesis. In terms of biological role, cell wall formation. The sequence is that of D-alanine--D-alanine ligase B (ddlB) from Salmonella typhimurium (strain LT2 / SGSC1412 / ATCC 700720).